The primary structure comprises 251 residues: Probable transcriptional regulatory protein DehaBAV1_0421 (251 aa).

Belongs to the TACO1 family.

It localises to the cytoplasm. The chain is Probable transcriptional regulatory protein DehaBAV1_0421 from Dehalococcoides mccartyi (strain ATCC BAA-2100 / JCM 16839 / KCTC 5957 / BAV1).